The primary structure comprises 205 residues: Thymidylate kinase (205 aa).

10-17 (GTEGVGKS) provides a ligand contact to ATP.

This sequence belongs to the thymidylate kinase family.

It carries out the reaction dTMP + ATP = dTDP + ADP. Phosphorylation of dTMP to form dTDP in both de novo and salvage pathways of dTTP synthesis. The chain is Thymidylate kinase from Teredinibacter turnerae (strain ATCC 39867 / T7901).